The sequence spans 427 residues: MTELTGVSIVTYQHIKVPSQGEKITVNKAVLEVPDRPIIPFIEGDGIGIDIAPVMKNVVDAAVEKSYAGKRKIEWMEIYAGEKATKVYGKDNWLPDETLEAIKEYQVAIKGPLTTPVGGGIRSLNVALRQQLDLYVCLRPVRYFTGVPSPVKTPEKVNMVIFRENSEDIYAGIEWPAGSPEAVKLINFLQNEMGVKKIRFPETAGIGIKPVSKEGTSRLVRRAIQYAIDNDRDSVTLVHKGNIMKFTEGAFKDWGYEVAVKEFGAKPLDGGPWHVFENPKTGQKITIKDVIADAFLQQILLRPAEYSVIATLNLNGDYISDALAAEVGGIGIAPGANLSDTVGLFEATHGTAPKYAGQDKVNPGSLILSAEMMLRYLGWKEAADLVVQGIEGAIESKTVTYDFARLMTGAKEVSTSQFGKAIIKHIL.

An NADP(+)-binding site is contributed by threonine 114. Positions 123, 125, 129, 139, and 163 each coordinate D-threo-isocitrate. Aspartate 317 is a Mg(2+) binding site. Residues 349–355 (HGTAPKY), asparagine 362, tyrosine 401, and arginine 405 contribute to the NADP(+) site.

It belongs to the isocitrate and isopropylmalate dehydrogenases family. As to quaternary structure, homodimer. The cofactor is Mg(2+). Mn(2+) is required as a cofactor.

The enzyme catalyses D-threo-isocitrate + NADP(+) = 2-oxoglutarate + CO2 + NADPH. Functionally, catalyzes the oxidative decarboxylation of isocitrate to 2-oxoglutarate and carbon dioxide with the concomitant reduction of NADP(+). This Coxiella burnetii (strain RSA 493 / Nine Mile phase I) protein is Isocitrate dehydrogenase [NADP] (icd).